The sequence spans 119 residues: Ig heavy chain V region T601 (119 aa).

Positions 1–112 (EVKLLESGGG…GYFDVWGAGT (112 aa)) constitute an Ig-like domain.

The protein is Ig heavy chain V region T601 of Mus musculus (Mouse).